The primary structure comprises 499 residues: Glycerol kinase (499 aa).

Threonine 13 is a binding site for ADP. Residues threonine 13, threonine 14, and serine 15 each contribute to the ATP site. Residue threonine 13 coordinates sn-glycerol 3-phosphate. Arginine 17 contributes to the ADP binding site. Residues arginine 83, glutamate 84, tyrosine 135, and aspartate 245 each coordinate sn-glycerol 3-phosphate. 5 residues coordinate glycerol: arginine 83, glutamate 84, tyrosine 135, aspartate 245, and glutamine 246. Residues threonine 267 and glycine 310 each coordinate ADP. ATP is bound by residues threonine 267, glycine 310, glutamine 314, and glycine 411. Positions 411 and 415 each coordinate ADP.

The protein belongs to the FGGY kinase family.

The catalysed reaction is glycerol + ATP = sn-glycerol 3-phosphate + ADP + H(+). Its pathway is polyol metabolism; glycerol degradation via glycerol kinase pathway; sn-glycerol 3-phosphate from glycerol: step 1/1. Inhibited by fructose 1,6-bisphosphate (FBP). In terms of biological role, key enzyme in the regulation of glycerol uptake and metabolism. Catalyzes the phosphorylation of glycerol to yield sn-glycerol 3-phosphate. The sequence is that of Glycerol kinase from Xanthomonas campestris pv. campestris (strain ATCC 33913 / DSM 3586 / NCPPB 528 / LMG 568 / P 25).